We begin with the raw amino-acid sequence, 120 residues long: NAD(P)H-quinone oxidoreductase subunit 3, chloroplastic (120 aa).

A run of 3 helical transmembrane segments spans residues 9–29, 64–84, and 88–108; these read IFWA…FISG, MFAL…PWAM, and VLGL…IVGL.

The protein belongs to the complex I subunit 3 family. In terms of assembly, NDH is composed of at least 16 different subunits, 5 of which are encoded in the nucleus.

It localises to the plastid. It is found in the chloroplast thylakoid membrane. It carries out the reaction a plastoquinone + NADH + (n+1) H(+)(in) = a plastoquinol + NAD(+) + n H(+)(out). It catalyses the reaction a plastoquinone + NADPH + (n+1) H(+)(in) = a plastoquinol + NADP(+) + n H(+)(out). Functionally, NDH shuttles electrons from NAD(P)H:plastoquinone, via FMN and iron-sulfur (Fe-S) centers, to quinones in the photosynthetic chain and possibly in a chloroplast respiratory chain. The immediate electron acceptor for the enzyme in this species is believed to be plastoquinone. Couples the redox reaction to proton translocation, and thus conserves the redox energy in a proton gradient. The chain is NAD(P)H-quinone oxidoreductase subunit 3, chloroplastic from Jasminum nudiflorum (Winter jasmine).